A 220-amino-acid chain; its full sequence is Orotate phosphoribosyltransferase (220 aa).

A 5-phospho-alpha-D-ribose 1-diphosphate-binding site is contributed by K26. 34 to 35 (FF) contributes to the orotate binding site. 5-phospho-alpha-D-ribose 1-diphosphate-binding positions include 72–73 (YK), R101, K102, K105, H107, and 126–134 (DDVITAGTS). Orotate-binding residues include T130 and R158.

It belongs to the purine/pyrimidine phosphoribosyltransferase family. PyrE subfamily. Homodimer. Mg(2+) is required as a cofactor.

The enzyme catalyses orotidine 5'-phosphate + diphosphate = orotate + 5-phospho-alpha-D-ribose 1-diphosphate. It functions in the pathway pyrimidine metabolism; UMP biosynthesis via de novo pathway; UMP from orotate: step 1/2. Catalyzes the transfer of a ribosyl phosphate group from 5-phosphoribose 1-diphosphate to orotate, leading to the formation of orotidine monophosphate (OMP). This chain is Orotate phosphoribosyltransferase, found in Bordetella avium (strain 197N).